Here is a 362-residue protein sequence, read N- to C-terminus: MSECLMFGMDCEARCMTSMTADEENICFLVGTNNIKNDKNQVNKLFMDPEASRLMSKTFRHPAGEVRAIAAHPTKSTILATCTADFSSLGGTHSITIWNIEEDKRTLETVSRLPTEQVMSCLEWEPNSMKCAAMTPFRPEIQLLNMENGPEIVQNLKIPLENEEDEMFSATWSPHHDGNMLGVTGGRTAWCIDCRTDNEYLKIRDAHIHRTISMDFNPNLQHVIATCGDDGYVRIWDTRSTSSALTSLHPHAHWVWSVRFHPVHDQLLLTGGSDASVVLSCAQSVSSEQQIEFRDDEEEEEDDDLVEKLQDGQLERIDEHEDSVYACAWSSADPWTFASLSYDGRMIVSNVSRKHKYALMQL.

WD repeat units lie at residues 61-108, 206-246, 250-290, and 319-359; these read HPAG…RTLE, AHIH…SALT, PHAH…SEQQ, and EHED…KYAL.

Belongs to the WD repeat EIPR1 family. Expressed in the hypodermis and the pharynx.

The protein localises to the cytoplasm. In terms of biological role, plays a role in the trafficking of cargo to dense-core vesicles, probably through association with the endosome-associated recycling protein (EARP) complex. Important for neuronal function. The sequence is that of EARP-interacting protein 1 from Caenorhabditis elegans.